Reading from the N-terminus, the 501-residue chain is MKFKADEISSIIKERIEKFDFNLEIEETGKIISVADGVAKVYGLKNAMAGEMVEFENGEKGMVLNLEESSVGIVILGKGLGLKEGSSVKRLKKLLKVPVGDALIGRVVNALGEPIDAKGVIEASEYRFVEEKAKGIMARKSVHEPLHTGIKAIDALVPIGRGQRELIIGDRQTGKTTVAIDTIISQKGKDVICIYVAIGQKQSTVAQVVKKLEEYGAMDYTIVVNAGASDPAALQYLAPYAGVTMGEYFRDNSRHALIVYDDLSKHAVAYREMSLILRRPPGREAYPGDVFYLHSRLLERASKLSDELGAGSLTALPIIETQAGDVSAYIPTNVISITDGQIFLETDLFNSGIRPAINVGLSVSRVGGAAQIKATKQVSGTLRLDLAQYRELQAFAQFASDLDEASRKQLERGQRMVEVLKQPPYSPLSPENQVVIIFAGTKGYLDDVAVSKIGEFEAALYPFIEAKYPEIFEQIRTKKALDKDLEEKLAKALSEFKANHI.

169–176 (GDRQTGKT) is a binding site for ATP.

The protein belongs to the ATPase alpha/beta chains family. F-type ATPases have 2 components, CF(1) - the catalytic core - and CF(0) - the membrane proton channel. CF(1) has five subunits: alpha(3), beta(3), gamma(1), delta(1), epsilon(1). CF(0) has three main subunits: a(1), b(2) and c(9-12). The alpha and beta chains form an alternating ring which encloses part of the gamma chain. CF(1) is attached to CF(0) by a central stalk formed by the gamma and epsilon chains, while a peripheral stalk is formed by the delta and b chains.

The protein resides in the cell inner membrane. It catalyses the reaction ATP + H2O + 4 H(+)(in) = ADP + phosphate + 5 H(+)(out). Functionally, produces ATP from ADP in the presence of a proton gradient across the membrane. The alpha chain is a regulatory subunit. The polypeptide is ATP synthase subunit alpha (Campylobacter lari (strain RM2100 / D67 / ATCC BAA-1060)).